We begin with the raw amino-acid sequence, 253 residues long: 5'/3'-nucleotidase SurE (253 aa).

4 residues coordinate a divalent metal cation: D8, D9, S39, and N92.

It belongs to the SurE nucleotidase family. It depends on a divalent metal cation as a cofactor.

It is found in the cytoplasm. The enzyme catalyses a ribonucleoside 5'-phosphate + H2O = a ribonucleoside + phosphate. It catalyses the reaction a ribonucleoside 3'-phosphate + H2O = a ribonucleoside + phosphate. The catalysed reaction is [phosphate](n) + H2O = [phosphate](n-1) + phosphate + H(+). Its function is as follows. Nucleotidase with a broad substrate specificity as it can dephosphorylate various ribo- and deoxyribonucleoside 5'-monophosphates and ribonucleoside 3'-monophosphates with highest affinity to 3'-AMP. Also hydrolyzes polyphosphate (exopolyphosphatase activity) with the preference for short-chain-length substrates (P20-25). Might be involved in the regulation of dNTP and NTP pools, and in the turnover of 3'-mononucleotides produced by numerous intracellular RNases (T1, T2, and F) during the degradation of various RNAs. This Citrobacter koseri (strain ATCC BAA-895 / CDC 4225-83 / SGSC4696) protein is 5'/3'-nucleotidase SurE.